Consider the following 219-residue polypeptide: Proteasome subunit beta type-9 (219 aa).

A propeptide spans 1–20 (removed in mature form); the sequence is MLRAGAPTAGSFRTEEVHTG. Residue Thr21 is the Nucleophile of the active site. N6-acetyllysine is present on residues Lys53 and Lys109.

It belongs to the peptidase T1B family. The 26S proteasome consists of a 20S proteasome core and two 19S regulatory subunits. The 20S proteasome core is composed of 28 subunits that are arranged in four stacked rings, resulting in a barrel-shaped structure. The two end rings are each formed by seven alpha subunits, and the two central rings are each formed by seven beta subunits. The catalytic chamber with the active sites is on the inside of the barrel. Component of the immunoproteasome, where it displaces the equivalent housekeeping subunit PSMB6. Component of the spermatoproteasome, a form of the proteasome specifically found in testis. Post-translationally, autocleaved. The resulting N-terminal Thr residue of the mature subunit is responsible for the nucleophile proteolytic activity.

The protein resides in the cytoplasm. Its subcellular location is the nucleus. It carries out the reaction Cleavage of peptide bonds with very broad specificity.. In terms of biological role, the proteasome is a multicatalytic proteinase complex which is characterized by its ability to cleave peptides with Arg, Phe, Tyr, Leu, and Glu adjacent to the leaving group at neutral or slightly basic pH. The proteasome has an ATP-dependent proteolytic activity. This subunit is involved in antigen processing to generate class I binding peptides. This chain is Proteasome subunit beta type-9 (Psmb9), found in Mus musculus bactrianus (Southwestern Asian house mouse).